Reading from the N-terminus, the 147-residue chain is Large ribosomal subunit protein uL16 (147 aa).

This sequence belongs to the universal ribosomal protein uL16 family. As to quaternary structure, part of the 50S ribosomal subunit.

Its function is as follows. Binds 23S rRNA and is also seen to make contacts with the A and possibly P site tRNAs. The chain is Large ribosomal subunit protein uL16 from Clostridium tetani (strain Massachusetts / E88).